The following is a 37-amino-acid chain: Esculentin-2HSa (37 aa).

Cysteines 31 and 37 form a disulfide.

In terms of tissue distribution, expressed by the skin glands.

It localises to the secreted. Its function is as follows. Has antibacterial activity against the Gram-positive bacterium S.aureus ATCC 25923 (MIC=32 uM) and the Gram-negative bacterium E.coli ATCC 25726 (MIC=16 uM). This is Esculentin-2HSa from Odorrana hosii (Hose's rock frog).